Consider the following 980-residue polypeptide: MREKLSLWAIFCLVVAFLPSQTESVAVMSVDLGSEWMKVAIVKPGVPMEIVLNKESRRKTPVAVCLKENERLFGDGALGVAVKNPKVVYRFLQSILGKTADNPQVAEYQKHFPEHQLQKDEKRGTVYFKFSEEMQYTPEELLGMILNYSRTLAQDFAEQPIKDAVITVPAYFNQAERRAVLQAAHIAGLKVLQLINDNTAVALNYGVFRRKDINSTAQNIMFYDMGSGSTTATIVTYQTVKTKESGTQPQLQIRGVGFDRTLGGFEMELRLRDHLAKLFNEQKKSKKDVRDNLRAMAKLLKEAQRLKTVLSANAEHTAQIEGLMDDIDFKAKVTRSEFEALCEDLFDRVPGPVKQALAAAEMSMDEIEQVILVGGATRVPKVQDVLLKSVGKEELSKNINADEAAAMGAVYQAAALSKAFKVKPFLVRDAAVFPIQVEFSRETEEEDGVKSLKHNKRILFQRMAPYPQRKVITFNRYIDDFVFYINYGDLSFLSEQDMKVFGSQNLTTVKLSGVGSSFKKHSDAESKGIKAHFNMDESGVLILDRVESVFETIVEEKEEESTLTKLGNTISSLFGGGSSEPSANVTEPVTDEEEVTPEAGKEQDQPEKQEETVQEKPETEEGKEAEPQAEEQKEDKEKAENQGETESEKTEKPEEKTTDEEKEADMKPKLQKKSKISADIAVELEVNDVLDPSAEDMEGSKKKLQDLTDRDLEKQEREKTLNSLEAFIFETQDKLYQDEYQAVVTEEEKEQISGRLSVASSWMDEEGYRAGTKLLKEKLSELKKLCKGMFFRVEERKKWPDRLAALDSMLNHSNIFLKSARLIPESDQIFTDVELKTLEKVINETITWKNETVAEQEKLSPTVKPVLLSKDIEAKLSLLDREVNYLLNKAKFAKPKPKDKAKDKNSTSESSKANSTDDAEKVIPPKTEDGAEKVKPAEEPPVVEEKAEETILELNPAENTDDKTESTESSKSENHIEDEL.

An N-terminal signal peptide occupies residues 1–24 (MREKLSLWAIFCLVVAFLPSQTES). Disordered regions lie at residues 558-682 (EEES…DIAV) and 894-980 (KPKP…EDEL). 2 stretches are compositionally biased toward basic and acidic residues: residues 599–656 (AGKE…PEEK) and 896–906 (KPKDKAKDKNS). The span at 907 to 916 (TSESSKANST) shows a compositional bias: polar residues. Basic and acidic residues-rich tracts occupy residues 918-949 (DAEKVIPPKTEDGAEKVKPAEEPPVVEEKAEE) and 960-980 (TDDKTESTESSKSENHIEDEL). A Prevents secretion from ER motif is present at residues 977–980 (EDEL).

Belongs to the heat shock protein 70 family.

It is found in the endoplasmic reticulum lumen. Its function is as follows. Has a pivotal role in cytoprotective cellular mechanisms triggered by oxygen deprivation. May play a role as a molecular chaperone and participate in protein folding. The protein is Hypoxia up-regulated protein 1 (hyou1) of Danio rerio (Zebrafish).